Consider the following 320-residue polypeptide: Tetraspanin-32 (320 aa).

A run of 4 helical transmembrane segments spans residues 14-34 (MLVTCFFILLLGLSVATMVTL), 60-80 (WAFSAGLSLVGLLTLGAVLSA), 90-110 (LMAGGFLCFSLAFCAQVQVVF), and 203-223 (SIGLALTVSALLFSSFLWFAI).

Belongs to the tetraspanin (TM4SF) family. In terms of tissue distribution, expressed ubiquitously at low levels. High levels of expression are confined to hematopoietic tissues including peripheral blood leukocytes, thymus and spleen.

The protein localises to the membrane. This chain is Tetraspanin-32 (TSPAN32), found in Homo sapiens (Human).